The primary structure comprises 333 residues: Fructose-1,6-bisphosphatase class 1 1 (333 aa).

Residues Glu81, Asp100, Leu102, and Asp103 each contribute to the Mg(2+) site. Residues 103–106 and Asn191 contribute to the substrate site; that span reads DGSS. Mg(2+) is bound at residue Glu263.

This sequence belongs to the FBPase class 1 family. As to quaternary structure, homotetramer. Mg(2+) is required as a cofactor.

The protein resides in the cytoplasm. It catalyses the reaction beta-D-fructose 1,6-bisphosphate + H2O = beta-D-fructose 6-phosphate + phosphate. It participates in carbohydrate biosynthesis; Calvin cycle. This Cereibacter sphaeroides (strain ATCC 17029 / ATH 2.4.9) (Rhodobacter sphaeroides) protein is Fructose-1,6-bisphosphatase class 1 1.